A 406-amino-acid chain; its full sequence is Vitamin D3 dihydroxylase (406 aa).

The span at 1–15 (MTDTATTPQTTDAPA) shows a compositional bias: low complexity. Residues 1-24 (MTDTATTPQTTDAPAFPSNRSCPY) are disordered. Thr-81 contacts calciol. 2 residues coordinate heme: His-103 and Arg-107. 3 residues coordinate calciol: Arg-193, Ser-236, and Ile-293. Residues Arg-297, His-353, and Cys-355 each contribute to the heme site.

It belongs to the cytochrome P450 family. It depends on heme as a cofactor.

It is found in the cytoplasm. The enzyme catalyses calciol + 2 reduced [2Fe-2S]-[ferredoxin] + O2 + 2 H(+) = calcidiol + 2 oxidized [2Fe-2S]-[ferredoxin] + H2O. The catalysed reaction is calcidiol + 2 reduced [2Fe-2S]-[ferredoxin] + O2 + 2 H(+) = calcitriol + 2 oxidized [2Fe-2S]-[ferredoxin] + H2O. Its function is as follows. Involved in the metabolism of vitamin D3 (calciol) and of a number of sulfonylurea herbicides. Catalyzes the two-step hydroxylation (25- and 1-alpha-hydroxylation) of vitamin D3 (VD3) to yield its active form 1-alpha,25-dihydroxyvitamin D3 (calcitriol). The first step is the hydroxylation of the C-25 position of VD3 to produce 25-hydroxyvitamin D3 (calcidiol). The second reaction is the hydroxylation of the C1-alpha-position of calcidiol to produce calcitriol. It can also hydroxylate vitamin D2. This is Vitamin D3 dihydroxylase from Streptomyces griseolus.